The chain runs to 352 residues: Probable protein phosphatase 2C 56 (352 aa).

Disordered regions lie at residues 18–37 (RGRR…ASRG) and 53–87 (SSSS…ITGG). 2 stretches are compositionally biased toward low complexity: residues 23–37 (AASP…ASRG) and 53–75 (SSSS…ARTR). The PPM-type phosphatase domain maps to 96–343 (SWDYSSFKGR…DNITCIVLQF (248 aa)). The Mn(2+) site is built by Asp132, Gly133, Asp295, and Asp334.

The protein belongs to the PP2C family. It depends on Mg(2+) as a cofactor. The cofactor is Mn(2+).

The enzyme catalyses O-phospho-L-seryl-[protein] + H2O = L-seryl-[protein] + phosphate. It catalyses the reaction O-phospho-L-threonyl-[protein] + H2O = L-threonyl-[protein] + phosphate. The protein is Probable protein phosphatase 2C 56 of Oryza sativa subsp. japonica (Rice).